Reading from the N-terminus, the 470-residue chain is MLRAGKKTNSQTSTSNDACSLLYINVPDFNCNMSQIENYCIDRFNLLNEVSKLKDTLSAQKSNTSKDNEDFRNLSSRFLGSTKDEQFKIKDELSHYCLRLAMCDSTDRNWFITTESILLANRLNQSDLTTIISSFKGFGWSPVSQEEYEQYQDDLGYLVKKANLNLNEVNNTHFYKLPFQDIPKLIDTKKAIIIKGEAYIYISNFKDMVIHTFKNYMNFALDRIKADKTRIKEEFPELIQFFTTLPKAGDGTNKPQLGNTKHIRKEDVSPLSKTSFPMCMRVMYDSLVETSSLKYEGRLQFGTFLKGIGLPYDEAINFWRIAFSKRVSNTDFDKEYLYNIRHNYGLEGKSTNYSPYSCPRIISKSPHNGDKLVHGCPYIQSLERLEQKLLDLGIDDFQRIQILEATKTSPNVACTKHFNFLHPNNTLTKLINHPNQFYDQSMEYYKTLEEKKSAKQSNNKENENQSIDEK.

Residues Cys-279, Cys-358, Cys-376, and Cys-414 each coordinate [4Fe-4S] cluster. The disordered stretch occupies residues 449–470; that stretch reads EEKKSAKQSNNKENENQSIDEK.

Belongs to the eukaryotic-type primase large subunit family. In terms of assembly, heterodimer of a small subunit and a large subunit. [4Fe-4S] cluster is required as a cofactor.

In terms of biological role, DNA primase is the polymerase that synthesizes small RNA primers for the Okazaki fragments made during discontinuous DNA replication. This chain is DNA primase large subunit (prim2), found in Dictyostelium discoideum (Social amoeba).